The primary structure comprises 283 residues: K88 fimbrial protein AC (283 aa).

The first 21 residues, 1–21, serve as a signal peptide directing secretion; sequence MKKTLIALAIAASAASGMAHA.

It belongs to the fimbrial K88 protein family. K88 fimbria, 0.1-1 micrometer in length and 7 nanometers in diameter, is composed of about 100 identical subunits.

It is found in the fimbrium. Functionally, K88 major fimbrial subunit. Fimbriae (also called pili), are polar filaments radiating from the surface of the bacterium to a length of 0.5-1.5 micrometers and numbering 100-300 per cell. They enable bacteria to colonize the epithelium of specific host organs. This Escherichia coli protein is K88 fimbrial protein AC (faeG).